The primary structure comprises 564 residues: MAAKPAPFGQSCSNCHKTTTSLWRRGPDNSLLCNACGLYQKHRKHARPVKSEDLKDISPLIQQVCKNGTCAGDGFCNGTGGSASCTGCPALNNRIRSLNASKSQSGRKSLSPNPSSVPSSTETKASPTPLESKPQIVSDTTTETSNGTSRRRSSHNQHEDSSPPHEPSVTFCQNCATTNTPLWRRDESGNPICNACGLYYKIHGVHRPVTMKKAIIKRRKRLVFNGNANESQHNLKRMSSGDSGSSVKQQSTRDGPFSKSFPNGNGHASGNSGEGLAEHGMNTGVLPPASTFPSYNSNFTGFLPSSFNPSPLMTLSRLAAGEPDNNGKVYYSYGPTQEQSILPLPENKHEGLPPYQNEYVPNGIRANQVVYPGQLVAVGNDSSKQLSESTTSNTDNNGVATANQSNPLGMKFHLPPILPVGESVCLPPRTSAKPRIAEGIASLLNPEEPPSNSDKQPSMSNGPKSEVSPSQSQQAPLIQSSTSPVSLQFPPEVQGSNVDKRNYALNVLSQLRSQHDLMIQELHNLNQHIQQIDEWLRSSDNENMASEHIKSSTPAVVASGALQT.

The segment at 12 to 36 (CSNCHKTTTSLWRRGPDNSLLCNAC) adopts a GATA-type 1 zinc-finger fold. The tract at residues 100 to 170 (ASKSQSGRKS…SSPPHEPSVT (71 aa)) is disordered. The residue at position 109 (Ser109) is a Phosphoserine. Residues 109-120 (SLSPNPSSVPSS) show a composition bias toward low complexity. Residues 135–148 (QIVSDTTTETSNGT) show a composition bias toward polar residues. The GATA-type 2 zinc-finger motif lies at 172-196 (CQNCATTNTPLWRRDESGNPICNAC). Disordered regions lie at residues 226–285 (GNAN…NTGV), 381–409 (DSSK…NPLG), and 443–496 (LLNP…VQGS). 4 stretches are compositionally biased toward polar residues: residues 240–253 (SGDS…QSTR), 260–271 (SFPNGNGHASGN), 381–407 (DSSK…QSNP), and 450–486 (PSNS…SPVS).

As to quaternary structure, interacts with tup11.

The protein localises to the nucleus. Activated by iron. In terms of biological role, transcriptional repressor that binds the consensus promoter sequence 5'-[AT]GATAA-3' during iron-replete conditions to down-regulate transcription of target genes. Represses the expression of the iron transporter fio1 in response to high iron concentrations. Also represses the expression of str1, str2 and str3. Represses the expression of shu1 in presence of iron. The protein is Iron-sensing transcriptional repressor of Schizosaccharomyces pombe (strain 972 / ATCC 24843) (Fission yeast).